The primary structure comprises 706 residues: Termination factor NPH-I homolog (706 aa).

The Helicase ATP-binding domain maps to 62-227 (IGQGENTRGL…VPCFNMLSGR (166 aa)). 75-82 (HQMGMGKT) is a binding site for ATP. The short motif at 168–171 (DEAH) is the DEAH box element. Positions 417-599 (QCLQPLKVLE…HLNSAFRDLL (183 aa)) constitute a Helicase C-terminal domain.

It belongs to the DEAD box helicase family. DEAH subfamily. In terms of assembly, part of the viral DNA-directed RNA polymerase that consists of 8 polII-like subunits (RPB1, RPB2, RPB3, RPB5, RPB6, RPB7, RPB9, RPB10), a capping enzyme and a termination factor.

The protein localises to the virion. Putative DNA-dependent ATPase required for providing the needed energy to achieve the termination of early transcripts. The sequence is that of Termination factor NPH-I homolog from African swine fever virus (isolate Warthog/Namibia/Wart80/1980) (ASFV).